The primary structure comprises 124 residues: Competence protein ComGG (124 aa).

The N-terminal stretch at 1–28 is a signal peptide; the sequence is MYRTRGFIYPAVLFVSALVLLIVNFVAA.

As to quaternary structure, the transformation pili are flexible filaments, consisting mainly of the major pilin ComGC and smaller amounts of the minor pilins, including at least ComGD, ComGF and ComGG. Interacts with ComGC; the interaction is probably direct. Interacts with ComGD. Interacts with ComGF. May act as a link between ComGC, ComGD and ComGF. Homodimer; disulfide-linked. A minor fraction of ComGG is found as a disulfide-bonded homodimer. Partial processing of ComGG in competent cells requires ComC.

Its subcellular location is the cell membrane. The protein resides in the secreted. Functionally, required for formation of the type IV-like pilus (T4P) that plays a role in transformation. Transformation pili are dynamically extended and retracted, perhaps thereby promoting DNA uptake and transformation. Required for transformation and DNA binding. The protein is Competence protein ComGG (comGG) of Bacillus subtilis (strain 168).